The following is a 172-amino-acid chain: UPF0254 protein Mlab_1743 (172 aa).

It belongs to the UPF0254 family.

This is UPF0254 protein Mlab_1743 from Methanocorpusculum labreanum (strain ATCC 43576 / DSM 4855 / Z).